Consider the following 476-residue polypeptide: Inner membrane transporter YcaM (476 aa).

Over 1–9 (MAGNVQEKQ) the chain is Cytoplasmic. Residues 10-30 (LRWYNIALMSFITVWGFGNVV) traverse the membrane as a helical segment. At 31-38 (NNYANQGL) the chain is on the periplasmic side. A helical membrane pass occupies residues 39 to 59 (VVVFSWVFIFALYFTPYALIV). The Cytoplasmic portion of the chain corresponds to 60–80 (GQLGSTFKDGKGGVSTWIKHT). Residues 81–101 (MGPGLAYLAAWTYWVVHIPYL) traverse the membrane as a helical segment. Over 102–125 (AQKPQAILIALGWAMKGDGSLIKE) the chain is Periplasmic. The helical transmembrane segment at 126–146 (YSVVALQGLTLVLFIFFMWVA) threads the bilayer. The Cytoplasmic portion of the chain corresponds to 147–154 (SRGMKSLK). A helical transmembrane segment spans residues 155–175 (IVGSVAGIAMFVMSLLYVAMA). The Periplasmic segment spans residues 176-195 (VTAPAITEVHIATTNITWET). Residues 196–216 (FIPHIDFTYITTISMLVFAVG) form a helical membrane-spanning segment. The Cytoplasmic segment spans residues 217–240 (GAEKISPYVNQTRNPGKEFPKGML). Residues 241 to 261 (CLAVMVAVCAILGSLAMGMMF) form a helical membrane-spanning segment. The Periplasmic segment spans residues 262–291 (DSRNIPDDLMTNGQYYAFQKLGEYYNMGNT). A helical membrane pass occupies residues 292–312 (LMVIYAIANTLGQVAALVFSI). At 313 to 343 (DAPLKVLLGDADSKYIPASLCRTNASGTPVN) the chain is on the cytoplasmic side. A helical transmembrane segment spans residues 344-364 (GYFLTLVLVAILIMLPTLGIG). At 365–375 (DMNNLYKWLLN) the chain is on the periplasmic side. The helical transmembrane segment at 376–396 (LNSVVMPLRYLWVFVAFIAVV) threads the bilayer. Residues 397–414 (RLAQKYKPEYVFIRNKPL) are Cytoplasmic-facing. The chain crosses the membrane as a helical span at residues 415–435 (AMTVGIWCFAFTAFACLTGIF). Residues 436–448 (PKMEAFTAEWTFQ) are Periplasmic-facing. A helical membrane pass occupies residues 449-469 (LALNVATPFVLVGLGLIFPLL). Topologically, residues 470-476 (ARKANSK) are cytoplasmic.

Belongs to the amino acid-polyamine-organocation (APC) superfamily.

It localises to the cell inner membrane. This Escherichia coli (strain K12) protein is Inner membrane transporter YcaM (ycaM).